We begin with the raw amino-acid sequence, 486 residues long: UDP-N-acetylmuramoyl-L-alanyl-D-glutamate--2,6-diaminopimelate ligase (486 aa).

Ser26 serves as a coordination point for UDP-N-acetyl-alpha-D-muramoyl-L-alanyl-D-glutamate. 104-110 is a binding site for ATP; the sequence is GTNGKTS. Residues 152 to 153, Ser179, Gln185, and Arg187 each bind UDP-N-acetyl-alpha-D-muramoyl-L-alanyl-D-glutamate; that span reads TT. N6-carboxylysine is present on Lys219. Residues Arg383, 407–410, Gly455, and Glu459 contribute to the meso-2,6-diaminopimelate site; that span reads DNPR. The Meso-diaminopimelate recognition motif signature appears at 407-410; that stretch reads DNPR.

Belongs to the MurCDEF family. MurE subfamily. The cofactor is Mg(2+). Post-translationally, carboxylation is probably crucial for Mg(2+) binding and, consequently, for the gamma-phosphate positioning of ATP.

The protein localises to the cytoplasm. The enzyme catalyses UDP-N-acetyl-alpha-D-muramoyl-L-alanyl-D-glutamate + meso-2,6-diaminopimelate + ATP = UDP-N-acetyl-alpha-D-muramoyl-L-alanyl-gamma-D-glutamyl-meso-2,6-diaminopimelate + ADP + phosphate + H(+). The protein operates within cell wall biogenesis; peptidoglycan biosynthesis. Functionally, catalyzes the addition of meso-diaminopimelic acid to the nucleotide precursor UDP-N-acetylmuramoyl-L-alanyl-D-glutamate (UMAG) in the biosynthesis of bacterial cell-wall peptidoglycan. The chain is UDP-N-acetylmuramoyl-L-alanyl-D-glutamate--2,6-diaminopimelate ligase from Caulobacter vibrioides (strain ATCC 19089 / CIP 103742 / CB 15) (Caulobacter crescentus).